The chain runs to 95 residues: Protein TusB (95 aa).

The protein belongs to the DsrH/TusB family. Heterohexamer, formed by a dimer of trimers. The hexameric TusBCD complex contains 2 copies each of TusB, TusC and TusD. The TusBCD complex interacts with TusE.

Its subcellular location is the cytoplasm. Its function is as follows. Part of a sulfur-relay system required for 2-thiolation of 5-methylaminomethyl-2-thiouridine (mnm(5)s(2)U) at tRNA wobble positions. The sequence is that of Protein TusB from Escherichia coli O139:H28 (strain E24377A / ETEC).